We begin with the raw amino-acid sequence, 457 residues long: Gustatory and odorant receptor 24 (457 aa).

The Cytoplasmic segment spans residues 1 to 115 (MSLYFNADTM…GGTAFVLASP (115 aa)). Residues 116-136 (SMTYCVLFFLLLTVYIAFILL) traverse the membrane as a helical segment. At 137–152 (NRIEIVRTLEGRFEES) the chain is on the extracellular side. A helical transmembrane segment spans residues 153 to 173 (VIAYLFIVNILPILIIPLMWY). Topologically, residues 174–209 (ESRKVVSVVNGWVDFETVYRETTGRALELRLRTKAQ) are cytoplasmic. The chain crosses the membrane as a helical span at residues 210 to 230 (VIAILLPILCSLSVAITHVTM). At 231 to 237 (VDFKLLQ) the chain is on the extracellular side. A helical membrane pass occupies residues 238 to 258 (VIPYCVLDTITYMMGGYWYMA). Over 259–309 (CETLSITAKILAEDFQRALRHVGPAAKVSEYRSLWLRLSKLARDTGFSTCY) the chain is Cytoplasmic. Residues 310–330 (TFTFICLYLFFIITLSIYGLM) form a helical membrane-spanning segment. At 331 to 341 (SQISDGFGVKD) the chain is on the extracellular side. The chain crosses the membrane as a helical span at residues 342–362 (IGLAVTAFCSVGLLFYICDEA). The Cytoplasmic segment spans residues 363–421 (HYASFNVRTNFQKKLLMVELSWMNTDAQTEINMFLRATEMNPSSINLGGFFDVNRTLFK). Residues 422–442 (SLLATMVTYLVVLLQFQISIP) traverse the membrane as a helical segment. Residues 443-457 (DEPSAMLMHSNSSHS) are Extracellular-facing. Asparagine 453 carries N-linked (GlcNAc...) asparagine glycosylation.

The protein belongs to the insect chemoreceptor superfamily. Gustatory receptor (GR) family. Gr21a subfamily. Carbon dioxide-responsive neurons coexpress GPRgr22 and GPRgr24 in the maxillary palp, at both larval and adult life stages.

The protein resides in the cell membrane. Gustatory receptor which mediates acceptance or avoidance behavior, depending on its substrates. GPRgr22 and GPRgr24 together are sufficient for olfactory carbon dioxide-chemosensation. The polypeptide is Gustatory and odorant receptor 24 (Anopheles gambiae (African malaria mosquito)).